A 413-amino-acid chain; its full sequence is ATP phosphoribosyltransferase 2, chloroplastic (413 aa).

A chloroplast-targeting transit peptide spans 1 to 57 (MPISIPLNATLQYSSPSSSSSSSSLVPSSPLFSPIPSTTVSLTGIRQRCLRMVTSCV).

It belongs to the ATP phosphoribosyltransferase family. Long subfamily. Requires Mg(2+) as cofactor.

The protein localises to the plastid. It is found in the chloroplast. The catalysed reaction is 1-(5-phospho-beta-D-ribosyl)-ATP + diphosphate = 5-phospho-alpha-D-ribose 1-diphosphate + ATP. The protein operates within amino-acid biosynthesis; L-histidine biosynthesis; L-histidine from 5-phospho-alpha-D-ribose 1-diphosphate: step 1/9. Its activity is regulated as follows. Feedback inhibited by L-histidine. Catalyzes the condensation of ATP and 5-phosphoribose 1-diphosphate to form N'-(5'-phosphoribosyl)-ATP (PR-ATP). This chain is ATP phosphoribosyltransferase 2, chloroplastic (HISN1B), found in Arabidopsis thaliana (Mouse-ear cress).